Here is an 878-residue protein sequence, read N- to C-terminus: Leucine--tRNA ligase (878 aa).

Positions 43-53 (PYPSGRIHMGH) match the 'HIGH' region motif. The 'KMSKS' region motif lies at 630–634 (KMSKS). ATP is bound at residue Lys633.

Belongs to the class-I aminoacyl-tRNA synthetase family.

Its subcellular location is the cytoplasm. The enzyme catalyses tRNA(Leu) + L-leucine + ATP = L-leucyl-tRNA(Leu) + AMP + diphosphate. This Rhodopseudomonas palustris (strain BisB5) protein is Leucine--tRNA ligase.